Here is a 1207-residue protein sequence, read N- to C-terminus: Systemin receptor SR160 (1207 aa).

The first 34 residues, M1–A34, serve as a signal peptide directing secretion. The short motif at C71 to C78 is the Cys pair 1 element. 20 LRR repeats span residues N109–Q131, T135–G157, N161–K181, S186–S207, E213–K234, N235–S257, N258–C280, K282–S304, L305–D325, T329–E350, S353–K375, N378–P401, K402–K423, N428–C450, Q452–L474, K476–Q499, A500–T523, K524–S547, N548–C570, and S572–Q594. An N-linked (GlcNAc...) asparagine glycan is attached at N119. N166 and N196 each carry an N-linked (GlcNAc...) asparagine glycan. N-linked (GlcNAc...) asparagine glycans are attached at residues N235 and N245. A glycan (N-linked (GlcNAc...) asparagine) is linked at N287. N-linked (GlcNAc...) asparagine glycans are attached at residues N339 and N363. N412 and N449 each carry an N-linked (GlcNAc...) asparagine glycan. An N-linked (GlcNAc...) asparagine glycan is attached at N521. 4 N-linked (GlcNAc...) asparagine glycosylation sites follow: N556, N584, N646, and N662. LRR repeat units lie at residues S664–M686, Y688–K711, N712–T735, and L736–D758. N-linked (GlcNAc...) asparagine glycans are attached at residues N724, N746, and N767. The short motif at C771–C779 is the Cys pair 2 element. A helical membrane pass occupies residues S803–I823. The region spanning F888–I1163 is the Protein kinase domain. Residues V894–V902 and K916 each bind ATP. Catalysis depends on D1014, which acts as the Proton acceptor.

Belongs to the protein kinase superfamily. Ser/Thr protein kinase family. In terms of processing, glycosylated.

The protein localises to the cell membrane. It catalyses the reaction L-seryl-[protein] + ATP = O-phospho-L-seryl-[protein] + ADP + H(+). The catalysed reaction is L-threonyl-[protein] + ATP = O-phospho-L-threonyl-[protein] + ADP + H(+). Its function is as follows. Receptor with a serine/threonine-protein kinase activity. Involved in the perception of systemin, a peptide hormone responsible for the systemic activation of defense genes in leaves of wounded plants. May also regulate, in response to brassinosteroid binding, a signaling cascade involved in plant development. This chain is Systemin receptor SR160, found in Solanum peruvianum (Peruvian tomato).